Consider the following 266-residue polypeptide: Putative carbamate hydrolase RutD (266 aa).

Belongs to the AB hydrolase superfamily. Hydrolase RutD family.

It carries out the reaction carbamate + 2 H(+) = NH4(+) + CO2. Its function is as follows. Involved in pyrimidine catabolism. May facilitate the hydrolysis of carbamate, a reaction that can also occur spontaneously. The protein is Putative carbamate hydrolase RutD of Escherichia coli O45:K1 (strain S88 / ExPEC).